Here is a 200-residue protein sequence, read N- to C-terminus: Holliday junction branch migration complex subunit RuvA (200 aa).

The domain I stretch occupies residues 1 to 64; it reads MIGHLRGIIV…EDAHTLYGFH (64 aa). Residues 65–143 are domain II; the sequence is NDHERRLFRA…RWHTNDTPSP (79 aa). The tract at residues 133–152 is disordered; it reads SRWHTNDTPSPEGLRSSNTQ. Residues 144 to 148 form a flexible linker region; it reads EGLRS. Positions 149–200 are domain III; the sequence is SNTQPTQDAISALMALGYKPQEAKRAIDAIQKPDLSAETLIRLALKQMVLGT.

It belongs to the RuvA family. Homotetramer. Forms an RuvA(8)-RuvB(12)-Holliday junction (HJ) complex. HJ DNA is sandwiched between 2 RuvA tetramers; dsDNA enters through RuvA and exits via RuvB. An RuvB hexamer assembles on each DNA strand where it exits the tetramer. Each RuvB hexamer is contacted by two RuvA subunits (via domain III) on 2 adjacent RuvB subunits; this complex drives branch migration. In the full resolvosome a probable DNA-RuvA(4)-RuvB(12)-RuvC(2) complex forms which resolves the HJ.

Its subcellular location is the cytoplasm. Its function is as follows. The RuvA-RuvB-RuvC complex processes Holliday junction (HJ) DNA during genetic recombination and DNA repair, while the RuvA-RuvB complex plays an important role in the rescue of blocked DNA replication forks via replication fork reversal (RFR). RuvA specifically binds to HJ cruciform DNA, conferring on it an open structure. The RuvB hexamer acts as an ATP-dependent pump, pulling dsDNA into and through the RuvAB complex. HJ branch migration allows RuvC to scan DNA until it finds its consensus sequence, where it cleaves and resolves the cruciform DNA. The polypeptide is Holliday junction branch migration complex subunit RuvA (Coxiella burnetii (strain Dugway 5J108-111)).